We begin with the raw amino-acid sequence, 498 residues long: Glycerol kinase (498 aa).

Position 12 (Thr-12) interacts with ADP. ATP-binding residues include Thr-12, Thr-13, and Ser-14. Sn-glycerol 3-phosphate is bound at residue Thr-12. Residue Arg-16 participates in ADP binding. Sn-glycerol 3-phosphate-binding residues include Arg-82, Glu-83, Tyr-134, and Asp-243. Positions 82, 83, 134, 243, and 244 each coordinate glycerol. Thr-265 and Gly-308 together coordinate ADP. ATP contacts are provided by Thr-265, Gly-308, Gln-312, and Gly-409. Gly-409 and Asn-413 together coordinate ADP.

Belongs to the FGGY kinase family.

The enzyme catalyses glycerol + ATP = sn-glycerol 3-phosphate + ADP + H(+). It participates in polyol metabolism; glycerol degradation via glycerol kinase pathway; sn-glycerol 3-phosphate from glycerol: step 1/1. With respect to regulation, inhibited by fructose 1,6-bisphosphate (FBP). Key enzyme in the regulation of glycerol uptake and metabolism. Catalyzes the phosphorylation of glycerol to yield sn-glycerol 3-phosphate. This Petrotoga mobilis (strain DSM 10674 / SJ95) protein is Glycerol kinase.